Reading from the N-terminus, the 240-residue chain is ATP-dependent dethiobiotin synthetase BioD (240 aa).

Residue 13-18 coordinates ATP; the sequence is EVGKTV. Residue T17 participates in Mg(2+) binding. K38 is an active-site residue. Residue S42 participates in substrate binding. ATP-binding positions include D55, 116–119, 176–177, and 205–207; these read EGAG, ND, and PWL. The Mg(2+) site is built by D55 and E116.

Belongs to the dethiobiotin synthetase family. In terms of assembly, homodimer. Requires Mg(2+) as cofactor.

It localises to the cytoplasm. It carries out the reaction (7R,8S)-7,8-diammoniononanoate + CO2 + ATP = (4R,5S)-dethiobiotin + ADP + phosphate + 3 H(+). Its pathway is cofactor biosynthesis; biotin biosynthesis; biotin from 7,8-diaminononanoate: step 1/2. Its function is as follows. Catalyzes a mechanistically unusual reaction, the ATP-dependent insertion of CO2 between the N7 and N8 nitrogen atoms of 7,8-diaminopelargonic acid (DAPA, also called 7,8-diammoniononanoate) to form a ureido ring. The protein is ATP-dependent dethiobiotin synthetase BioD of Pseudescherichia vulneris (Escherichia vulneris).